Consider the following 299-residue polypeptide: uncharacterized protein (299 aa).

The helical transmembrane segment at L25 to S45 threads the bilayer.

The protein resides in the membrane. This is an uncharacterized protein from Rickettsia prowazekii (strain Madrid E).